Reading from the N-terminus, the 479-residue chain is Glutamate--tRNA ligase (479 aa).

Positions 9 to 19 match the 'HIGH' region motif; it reads PSPTGLFHIGT. Positions 248 to 252 match the 'KMSKS' region motif; the sequence is KLSKR. An ATP-binding site is contributed by K251.

The protein belongs to the class-I aminoacyl-tRNA synthetase family. Glutamate--tRNA ligase type 1 subfamily. As to quaternary structure, monomer.

It localises to the cytoplasm. The enzyme catalyses tRNA(Glu) + L-glutamate + ATP = L-glutamyl-tRNA(Glu) + AMP + diphosphate. Catalyzes the attachment of glutamate to tRNA(Glu) in a two-step reaction: glutamate is first activated by ATP to form Glu-AMP and then transferred to the acceptor end of tRNA(Glu). In Prochlorococcus marinus (strain MIT 9312), this protein is Glutamate--tRNA ligase.